Here is a 369-residue protein sequence, read N- to C-terminus: Protein VP6 (369 aa).

The interval 20–208 is disordered; that stretch reads LEQRSIAPLL…EEAKVGGGDR (189 aa). The segment covering 29–66 has biased composition (basic and acidic residues); it reads LREKNSTEAKSKLKEDGEKKNKSEKEENKIHDDRRVES. Gly residues-rich tracts occupy residues 92–111 and 162–171; these read TGGGDGGAGARTGIGGGGVG and TSGGLQGRGG. The segment covering 196-208 has biased composition (basic and acidic residues); that stretch reads TEGEEAKVGGGDR.

Belongs to the orbivirus VP6 family.

The protein resides in the virion. The protein is Protein VP6 (S9) of African horse sickness virus 3 (AHSV-3).